A 1512-amino-acid chain; its full sequence is Bifunctional glutamate/proline--tRNA ligase (1512 aa).

Residues 164–759 (GTKWDVSGNR…SSVLYSRVAV (596 aa)) form a glutamate--tRNA ligase region. Residues 204 to 214 (PEASGYLHIGH) carry the 'HIGH' region motif. Positions 294–315 (TPAEQMKAEREQRTESKHRKNS) are disordered. A compositionally biased stretch (basic and acidic residues) spans 299–308 (MKAEREQRTE). N6-acetyllysine; alternate is present on lysine 300. Lysine 300 carries the post-translational modification N6-malonyllysine; alternate. The residue at position 355 (threonine 355) is a Phosphothreonine. Lysine 417 is subject to N6-acetyllysine. Residues 432-436 (VLSKR) carry the 'KMSKS' region motif. Serine 434 is subject to Phosphoserine. Residues lysine 498, lysine 535, lysine 542, and lysine 637 each carry the N6-acetyllysine modification. A compositionally biased stretch (basic and acidic residues) spans 709 to 736 (EMPTSGSKEKTKVEISKKETSSAPKERP). The tract at residues 709-742 (EMPTSGSKEKTKVEISKKETSSAPKERPAPAVSS) is disordered. One can recognise a WHEP-TRS 1 domain in the interval 749–805 (DSSVLYSRVAVQGDVVRELKAKKAPKEDIDAAVKQLLTLKAEYKEKTGQEYKPGNPS). The 3 X 57 AA approximate repeats stretch occupies residues 760 to 956 (QGDVVRELKA…GIEYKPVSAT (197 aa)). Lysine 788 carries the post-translational modification N6-acetyllysine. The segment at 795–819 (TGQEYKPGNPSAAAVQTVSTKSSSN) is disordered. The span at 808–819 (AVQTVSTKSSSN) shows a compositional bias: polar residues. Residues 822 to 878 (ESTSLYNKVAAQGEVVRKLKAEKAPKAKVTEAVECLLSLKAEYKEKTGKDYVPGQPP) form the WHEP-TRS 2 domain. Residue lysine 861 is modified to N6-acetyllysine. Disordered regions lie at residues 869–898 (GKDY…GAEK) and 956–1011 (TGAE…PKKQ). Position 872 is a phosphotyrosine (tyrosine 872). Over residues 878–892 (PASQNSHSNPVSNAQ) the composition is skewed to polar residues. Residue serine 885 is modified to Phosphoserine. Positions 900-956 (EAKVLFDRVACQGEVVRKLKAEKASKDQVDSAVQELLQLKAQYKSLTGIEYKPVSAT) constitute a WHEP-TRS 3 domain. Residues 958-976 (AEDKDKKKKEKENKSEKQN) are compositionally biased toward basic and acidic residues. Gly residues predominate over residues 997 to 1006 (LSSGGAGEGQ). Serine 998 carries the phosphoserine modification. Position 999 is a phosphoserine; by RPS6KB1 (serine 999). The segment at 1007-1512 (GPKKQTRLGL…KFYTLFGRSY (506 aa)) is proline--tRNA ligase. Residues 1121–1123 (TSE) and arginine 1152 contribute to the L-proline site. ATP-binding residues include arginine 1152, glutamate 1154, arginine 1163, threonine 1164, glutamine 1237, and threonine 1240. An Omega-N-methylarginine modification is found at arginine 1152. Glutamine 1237 contacts Mg(2+). Histidine 1242 contacts L-proline. Residues threonine 1276 and arginine 1278 each coordinate ATP. Position 1350 is a phosphoserine (serine 1350). The Zn(2+) site is built by cysteine 1448, cysteine 1453, cysteine 1495, and cysteine 1497. Residue lysine 1503 is modified to N6-acetyllysine.

In the N-terminal section; belongs to the class-I aminoacyl-tRNA synthetase family. Glutamate--tRNA ligase type 2 subfamily. It in the C-terminal section; belongs to the class-II aminoacyl-tRNA synthetase family. Homodimer. Part of the aminoacyl-tRNA synthetase multienzyme complex, also know as multisynthetase complex, that is composed of the tRNA ligases for Arg (RARS1), Asp (DARS1), Gln (QARS1), Ile (IARS1), Leu (LARS1), Lys (KARS1), Met (MARS1) the bifunctional ligase for Glu and Pro (EPRS1) and the auxiliary subunits AIMP1/p43, AIMP2/p38 and EEF1E1/p18. Forms a linear complex that contains MARS1, EEF1E1, EPRS1 and AIMP2 that is at the core of the multisubunit complex. Interacts with TARS3. Interacts with DUS2L. Component of the GAIT complex which is composed of EPRS1, RPL13A and GAPDH. Interacts (phosphorylated at Ser-999) with SLC27A1; mediates the translocation of SLC27A1 from the cytoplasm to the plasma membrane thereby increasing the uptake of long-chain fatty acids. In terms of processing, phosphorylated at Ser-999 by RPS6KB1; triggers EPRS1 release from the aminoacyl-tRNA synthetase multienzyme complex. In monocytes, the IFN-gamma-induced phosphorylation at Ser-999 releases EPRS1 from the aminoacyl-tRNA synthetase multienzyme complex, allowing its association with the GAIT complex. Phosphorylation at Ser-999 is specifically required for the RPL13A-mediated interaction of the GAIT complex with eIF4G. Phosphorylation at Ser-999 by RPS6KB1, is also induced by insulin through activation of the mTORC1 signaling pathway and promotes the interaction of EPRS1 with SLC27A1.

The protein localises to the cytoplasm. Its subcellular location is the cytosol. It localises to the membrane. The catalysed reaction is tRNA(Glu) + L-glutamate + ATP = L-glutamyl-tRNA(Glu) + AMP + diphosphate. The enzyme catalyses tRNA(Pro) + L-proline + ATP = L-prolyl-tRNA(Pro) + AMP + diphosphate. Its function is as follows. Multifunctional protein which primarily functions within the aminoacyl-tRNA synthetase multienzyme complex, also known as multisynthetase complex. Within the complex it catalyzes the attachment of both L-glutamate and L-proline to their cognate tRNAs in a two-step reaction where the amino acid is first activated by ATP to form a covalent intermediate with AMP. Subsequently, the activated amino acid is transferred to the acceptor end of the cognate tRNA to form L-glutamyl-tRNA(Glu) and L-prolyl-tRNA(Pro). Upon interferon-gamma stimulation, EPRS1 undergoes phosphorylation, causing its dissociation from the aminoacyl-tRNA synthetase multienzyme complex. It is recruited to form the GAIT complex, which binds to stem loop-containing GAIT elements found in the 3'-UTR of various inflammatory mRNAs, such as ceruloplasmin. The GAIT complex inhibits the translation of these mRNAs, allowing interferon-gamma to redirect the function of EPRS1 from protein synthesis to translation inhibition in specific cell contexts. Furthermore, it can function as a downstream effector in the mTORC1 signaling pathway, by promoting the translocation of SLC27A1 from the cytoplasm to the plasma membrane where it mediates the uptake of long-chain fatty acid by adipocytes. Thereby, EPRS1 also plays a role in fat metabolism and more indirectly influences lifespan. The polypeptide is Bifunctional glutamate/proline--tRNA ligase (Mus musculus (Mouse)).